The primary structure comprises 301 residues: Phosphatidylglycerol--prolipoprotein diacylglyceryl transferase (301 aa).

The next 4 membrane-spanning stretches (helical) occupy residues 10–30 (IAFSLGPVKVHWYGLMYLASF), 57–77 (LLFYAMMGVVLGGRVGYMLFY), 92–112 (VWEGGMSFHGGLIGVLLAVAW), and 119–139 (LQMFDVLDFGAPLVPVGLGFG). An a 1,2-diacyl-sn-glycero-3-phospho-(1'-sn-glycerol)-binding site is contributed by arginine 140. 3 helical membrane passes run 202-222 (PSQLYEAFLEGLVMFIVLWLF), 230-250 (YAVSGLFALLYGVFRFLVEFV), and 264-284 (LTRGQILSLPLIVIGLFLFWL).

Belongs to the Lgt family.

The protein localises to the cell inner membrane. The catalysed reaction is L-cysteinyl-[prolipoprotein] + a 1,2-diacyl-sn-glycero-3-phospho-(1'-sn-glycerol) = an S-1,2-diacyl-sn-glyceryl-L-cysteinyl-[prolipoprotein] + sn-glycerol 1-phosphate + H(+). The protein operates within protein modification; lipoprotein biosynthesis (diacylglyceryl transfer). Its function is as follows. Catalyzes the transfer of the diacylglyceryl group from phosphatidylglycerol to the sulfhydryl group of the N-terminal cysteine of a prolipoprotein, the first step in the formation of mature lipoproteins. This Xylella fastidiosa (strain 9a5c) protein is Phosphatidylglycerol--prolipoprotein diacylglyceryl transferase.